The following is a 189-amino-acid chain: Elongation factor P (189 aa).

It belongs to the elongation factor P family.

It is found in the cytoplasm. Its pathway is protein biosynthesis; polypeptide chain elongation. Its function is as follows. Involved in peptide bond synthesis. Stimulates efficient translation and peptide-bond synthesis on native or reconstituted 70S ribosomes in vitro. Probably functions indirectly by altering the affinity of the ribosome for aminoacyl-tRNA, thus increasing their reactivity as acceptors for peptidyl transferase. This is Elongation factor P from Pseudomonas fluorescens (strain Pf0-1).